A 479-amino-acid polypeptide reads, in one-letter code: Cell division protein FtsA (479 aa).

The segment at Gln417 to Leu458 is disordered. A compositionally biased stretch (basic and acidic residues) spans Gln420–Pro440.

The protein belongs to the FtsA/MreB family. As to quaternary structure, self-interacts. Interacts with FtsZ.

It is found in the cell inner membrane. Cell division protein that is involved in the assembly of the Z ring. May serve as a membrane anchor for the Z ring. The chain is Cell division protein FtsA from Porphyromonas gingivalis (strain ATCC BAA-308 / W83).